The sequence spans 208 residues: LexA repressor (208 aa).

A DNA-binding region (H-T-H motif) is located at residues 28–48; that stretch reads RAEIARELGFRSANAAEEHLK. Catalysis depends on for autocatalytic cleavage activity residues serine 125 and lysine 162.

The protein belongs to the peptidase S24 family. Homodimer.

It catalyses the reaction Hydrolysis of Ala-|-Gly bond in repressor LexA.. Functionally, represses a number of genes involved in the response to DNA damage (SOS response), including recA and lexA. In the presence of single-stranded DNA, RecA interacts with LexA causing an autocatalytic cleavage which disrupts the DNA-binding part of LexA, leading to derepression of the SOS regulon and eventually DNA repair. This is LexA repressor from Aliivibrio fischeri (strain MJ11) (Vibrio fischeri).